A 319-amino-acid polypeptide reads, in one-letter code: Pectinesterase (319 aa).

Gln1 bears the Pyrrolidone carboxylic acid mark. Substrate-binding residues include Thr83 and Gln113. Asp136 acts as the Proton donor in catalysis. A disulfide bridge connects residues Cys150 and Cys170. The Nucleophile role is filled by Asp157. Residues Arg225 and Trp227 each contribute to the substrate site.

The protein belongs to the pectinesterase family.

The protein localises to the secreted. The protein resides in the cell wall. It catalyses the reaction [(1-&gt;4)-alpha-D-galacturonosyl methyl ester](n) + n H2O = [(1-&gt;4)-alpha-D-galacturonosyl](n) + n methanol + n H(+). Its pathway is glycan metabolism; pectin degradation; 2-dehydro-3-deoxy-D-gluconate from pectin: step 1/5. Its function is as follows. Catalyzes the deesterification of methyl-esterified D-galactosiduronic acid units in pectic compounds. It participates in modulating cell wall during fruit ripening, cell wall extension during pollen germination, and in defense mechanisms against pathogens. The sequence is that of Pectinesterase from Daucus carota (Wild carrot).